The chain runs to 404 residues: MKEPFQKALGIIQTLQQHGYEAYFVGGAVRDLLLNREIGDIDIATSALPDEVMQLFPKTIDIGSQHGTVVVVHNGISYEVTTFRTESEYEDYRRPGAVTFVRSLYEDLQRRDFTMNAIAMDAEGKLIDPFGGQEAIANRIICTVGDPKARFSEDALRMMRAIRFVGQLGFSLDEETKQAIIENAALLAHISVERMTMEFEKLLEGPFASRALSLLVETGLFLYLPMLRDKENELQAAARYNWRLLDSRGQRWGFLCYILCIDSAADFLRAWKLPNRLIKEVEMALRILQTIPSSSDWTKERLFEFGLEHAIAAETIRSVASGENVEEHRKKLNELFMSLPIKTKKELAVSGNDIMKWFGKPGGPWVKEILTLIERAVIHGEVDNHKERIHEWLIHRNLIRGENC.

ATP contacts are provided by Gly27 and Arg30. Positions 27 and 30 each coordinate CTP. Asp40 and Asp42 together coordinate Mg(2+). ATP contacts are provided by Arg111, Asp154, Arg157, Arg160, and Arg163. CTP-binding residues include Arg111, Asp154, Arg157, Arg160, and Arg163.

This sequence belongs to the tRNA nucleotidyltransferase/poly(A) polymerase family. Bacterial CCA-adding enzyme type 3 subfamily. Homodimer. The cofactor is Mg(2+).

The catalysed reaction is a tRNA precursor + 2 CTP + ATP = a tRNA with a 3' CCA end + 3 diphosphate. The enzyme catalyses a tRNA with a 3' CCA end + 2 CTP + ATP = a tRNA with a 3' CCACCA end + 3 diphosphate. In terms of biological role, catalyzes the addition and repair of the essential 3'-terminal CCA sequence in tRNAs without using a nucleic acid template. Adds these three nucleotides in the order of C, C, and A to the tRNA nucleotide-73, using CTP and ATP as substrates and producing inorganic pyrophosphate. tRNA 3'-terminal CCA addition is required both for tRNA processing and repair. Also involved in tRNA surveillance by mediating tandem CCA addition to generate a CCACCA at the 3' terminus of unstable tRNAs. While stable tRNAs receive only 3'-terminal CCA, unstable tRNAs are marked with CCACCA and rapidly degraded. The chain is CCA-adding enzyme from Geobacillus sp. (strain WCH70).